The chain runs to 159 residues: SsrA-binding protein (159 aa).

It belongs to the SmpB family.

The protein resides in the cytoplasm. Functionally, required for rescue of stalled ribosomes mediated by trans-translation. Binds to transfer-messenger RNA (tmRNA), required for stable association of tmRNA with ribosomes. tmRNA and SmpB together mimic tRNA shape, replacing the anticodon stem-loop with SmpB. tmRNA is encoded by the ssrA gene; the 2 termini fold to resemble tRNA(Ala) and it encodes a 'tag peptide', a short internal open reading frame. During trans-translation Ala-aminoacylated tmRNA acts like a tRNA, entering the A-site of stalled ribosomes, displacing the stalled mRNA. The ribosome then switches to translate the ORF on the tmRNA; the nascent peptide is terminated with the 'tag peptide' encoded by the tmRNA and targeted for degradation. The ribosome is freed to recommence translation, which seems to be the essential function of trans-translation. The sequence is that of SsrA-binding protein from Coxiella burnetii (strain CbuG_Q212) (Coxiella burnetii (strain Q212)).